The primary structure comprises 182 residues: Translation initiation factor IF-3, chloroplastic (182 aa).

Belongs to the IF-3 family. As to quaternary structure, monomer.

The protein localises to the plastid. The protein resides in the chloroplast. IF-3 binds to the 30S ribosomal subunit and shifts the equilibrium between 70S ribosomes and their 50S and 30S subunits in favor of the free subunits, thus enhancing the availability of 30S subunits on which protein synthesis initiation begins. In Porphyra purpurea (Red seaweed), this protein is Translation initiation factor IF-3, chloroplastic.